Consider the following 488-residue polypeptide: MTKNNETGWNLDNSYTTLPQSFYTEIPPTPVSSPELVKLNHSLAISLGLTPEELKKEAEIAIFAGNALPEGAHPLAQAYAGHQFGHFNMLGDGRALLIGEQITPSGERFDIQLKGSGPTPYSRRGDGRAALGPMLREYIISEAMYALDIPTTRSLAVVTTGEATYRETKLPGAILTRVASSHIRVGTFQYAAARGSIEDLKSLADYTIKRHYPEIEAHENRYTALLQEVIKRQASLIAKWQLVGFIHGVMNTDNITISGETIDYGPCAFMDNYNQGTVFSSIDTQGRYAYGNQPYMAAWDLARLAESLIPILHEDEEEALKIAQDEISKFSVQYENHWFLGMKKKLGLFSTEEQDQPLIEQLLKMMEKYKADYTNTFRSLTLDAIENTALFESPEYKDWYKLWQSRLKRQEQSKENAYEMMKNNNPSIIPRNHRVEEALEAAVTNDDYSVMEKLLEALSNPYAYSTDQEEYCIPPAPTNRPYRTFCGT.

Glycine 91, glycine 93, arginine 94, lysine 114, aspartate 126, glycine 127, arginine 177, and arginine 184 together coordinate ATP. Aspartate 253 acts as the Proton acceptor in catalysis. Residues asparagine 254 and aspartate 263 each contribute to the Mg(2+) site. Residue aspartate 263 coordinates ATP.

Belongs to the SELO family. It depends on Mg(2+) as a cofactor. Mn(2+) is required as a cofactor.

It carries out the reaction L-seryl-[protein] + ATP = 3-O-(5'-adenylyl)-L-seryl-[protein] + diphosphate. The enzyme catalyses L-threonyl-[protein] + ATP = 3-O-(5'-adenylyl)-L-threonyl-[protein] + diphosphate. The catalysed reaction is L-tyrosyl-[protein] + ATP = O-(5'-adenylyl)-L-tyrosyl-[protein] + diphosphate. It catalyses the reaction L-histidyl-[protein] + UTP = N(tele)-(5'-uridylyl)-L-histidyl-[protein] + diphosphate. It carries out the reaction L-seryl-[protein] + UTP = O-(5'-uridylyl)-L-seryl-[protein] + diphosphate. The enzyme catalyses L-tyrosyl-[protein] + UTP = O-(5'-uridylyl)-L-tyrosyl-[protein] + diphosphate. In terms of biological role, nucleotidyltransferase involved in the post-translational modification of proteins. It can catalyze the addition of adenosine monophosphate (AMP) or uridine monophosphate (UMP) to a protein, resulting in modifications known as AMPylation and UMPylation. The chain is Protein nucleotidyltransferase YdiU from Bacillus cereus (strain G9842).